The primary structure comprises 412 residues: Imidazolonepropionase (412 aa).

Positions 71 and 73 each coordinate Fe(3+). Zn(2+)-binding residues include histidine 71 and histidine 73. Positions 80, 143, and 176 each coordinate 4-imidazolone-5-propanoate. Tyrosine 143 contacts N-formimidoyl-L-glutamate. A Fe(3+)-binding site is contributed by histidine 241. Residue histidine 241 participates in Zn(2+) binding. Position 244 (glutamine 244) interacts with 4-imidazolone-5-propanoate. Fe(3+) is bound at residue aspartate 316. Zn(2+) is bound at residue aspartate 316. N-formimidoyl-L-glutamate is bound by residues asparagine 318 and glycine 320. Threonine 321 serves as a coordination point for 4-imidazolone-5-propanoate.

The protein belongs to the metallo-dependent hydrolases superfamily. HutI family. The cofactor is Zn(2+). It depends on Fe(3+) as a cofactor.

Its subcellular location is the cytoplasm. It catalyses the reaction 4-imidazolone-5-propanoate + H2O = N-formimidoyl-L-glutamate. Its pathway is amino-acid degradation; L-histidine degradation into L-glutamate; N-formimidoyl-L-glutamate from L-histidine: step 3/3. In terms of biological role, catalyzes the hydrolytic cleavage of the carbon-nitrogen bond in imidazolone-5-propanoate to yield N-formimidoyl-L-glutamate. It is the third step in the universal histidine degradation pathway. The protein is Imidazolonepropionase of Aromatoleum aromaticum (strain DSM 19018 / LMG 30748 / EbN1) (Azoarcus sp. (strain EbN1)).